Reading from the N-terminus, the 340-residue chain is Glycerol-3-phosphate dehydrogenase [NAD(P)+] (340 aa).

Ser-11, Trp-12, Arg-32, Arg-33, and Lys-106 together coordinate NADPH. Positions 106, 138, and 140 each coordinate sn-glycerol 3-phosphate. Ala-142 serves as a coordination point for NADPH. 5 residues coordinate sn-glycerol 3-phosphate: Lys-193, Asp-246, Ser-256, Arg-257, and Asn-258. Catalysis depends on Lys-193, which acts as the Proton acceptor. Arg-257 contacts NADPH. NADPH is bound by residues Val-281 and Glu-283.

It belongs to the NAD-dependent glycerol-3-phosphate dehydrogenase family.

The protein resides in the cytoplasm. The catalysed reaction is sn-glycerol 3-phosphate + NAD(+) = dihydroxyacetone phosphate + NADH + H(+). The enzyme catalyses sn-glycerol 3-phosphate + NADP(+) = dihydroxyacetone phosphate + NADPH + H(+). The protein operates within membrane lipid metabolism; glycerophospholipid metabolism. Its function is as follows. Catalyzes the reduction of the glycolytic intermediate dihydroxyacetone phosphate (DHAP) to sn-glycerol 3-phosphate (G3P), the key precursor for phospholipid synthesis. The chain is Glycerol-3-phosphate dehydrogenase [NAD(P)+] from Shouchella clausii (strain KSM-K16) (Alkalihalobacillus clausii).